The sequence spans 588 residues: Proline--tRNA ligase (588 aa).

Belongs to the class-II aminoacyl-tRNA synthetase family. ProS type 1 subfamily. In terms of assembly, homodimer.

It is found in the cytoplasm. It carries out the reaction tRNA(Pro) + L-proline + ATP = L-prolyl-tRNA(Pro) + AMP + diphosphate. Functionally, catalyzes the attachment of proline to tRNA(Pro) in a two-step reaction: proline is first activated by ATP to form Pro-AMP and then transferred to the acceptor end of tRNA(Pro). As ProRS can inadvertently accommodate and process non-cognate amino acids such as alanine and cysteine, to avoid such errors it has two additional distinct editing activities against alanine. One activity is designated as 'pretransfer' editing and involves the tRNA(Pro)-independent hydrolysis of activated Ala-AMP. The other activity is designated 'posttransfer' editing and involves deacylation of mischarged Ala-tRNA(Pro). The misacylated Cys-tRNA(Pro) is not edited by ProRS. This is Proline--tRNA ligase from Corynebacterium glutamicum (strain R).